The chain runs to 434 residues: MSILKVHAREIFDSRGNPTVEVDLFTAKGLFRAAVPSGASTGIYEALELRDNDKTRYMGKGVSKAVEHINKTIAPALVSKKLNVVEQEKIDKLMIEMDGTENKSKFGANAILGVSLAVCKAGAVEKGVPLYRHIADLAGNAEVILPVPAFNVINGGSHAGNKLAMQEFMILPVGAENFREAMRIGAEVYHNLKNVIKEKYGKDATNVGDEGGFAPNILENKEALELLKNAIGKAGYSDKVVIGMDVAASEFYRSGKYDLDFKSPDDPSRYITPDELANLYKSFIRDYPVVSIEDPFDQDDWEAWQKFTASAGIQVVGDDLTVTNPKRIAKAVSEKSCNCLLLKVNQIGSVTESLQACKLAQSNGWGVMVSHRSGETEDTFIADLVVGLCTGQIKTVAPCRSERLAKYNQILRIEEELGSKAKFAGRSFRNPLAK.

An N-acetylserine modification is found at serine 2. Lysine 5 is modified (N6-acetyllysine). Residue serine 40 coordinates Mg(2+). Phosphotyrosine is present on tyrosine 44. Lysine 60 is modified (N6-acetyllysine; alternate). Lysine 60 carries the post-translational modification N6-succinyllysine; alternate. An N6-acetyllysine mark is found at lysine 64 and lysine 71. Lysine 89 is subject to N6-acetyllysine; alternate. Lysine 89 is modified (N6-succinyllysine; alternate). An N6-acetyllysine mark is found at lysine 92 and lysine 126. Residues histidine 158 and glutamate 167 each contribute to the substrate site. 2 positions are modified to N6-acetyllysine: lysine 193 and lysine 199. At lysine 202 the chain carries N6-acetyllysine; alternate. Lysine 202 participates in a covalent cross-link: Glycyl lysine isopeptide (Lys-Gly) (interchain with G-Cter in SUMO2); alternate. Residue glutamate 210 is the Proton donor of the active site. 2 positions are modified to N6-acetyllysine; alternate: lysine 228 and lysine 233. At lysine 228 the chain carries N6-succinyllysine; alternate. Lysine 228 carries the post-translational modification N6-(2-hydroxyisobutyryl)lysine; alternate. An N6-malonyllysine; alternate modification is found at lysine 233. Residue aspartate 245 coordinates Mg(2+). Serine 254 bears the Phosphoserine mark. At lysine 256 the chain carries N6-acetyllysine. At serine 263 the chain carries Phosphoserine. N6-acetyllysine; alternate is present on lysine 281. Lysine 281 carries the post-translational modification N6-(2-hydroxyisobutyryl)lysine; alternate. Tyrosine 287 is subject to Phosphotyrosine. Serine 291 carries the phosphoserine modification. Mg(2+) contacts are provided by glutamate 293 and aspartate 318. The substrate site is built by glutamate 293 and aspartate 318. N6-acetyllysine is present on residues lysine 335 and lysine 343. Residue lysine 343 is the Proton acceptor of the active site. Substrate-binding positions include 370 to 373 (SHRS) and lysine 394. The required for interaction with PLG stretch occupies residues 405–434 (AKYNQILRIEEELGSKAKFAGRSFRNPLAK). At lysine 406 the chain carries N6-acetyllysine. Lysine 420 is modified (N6-acetyllysine; alternate). Lysine 420 carries the post-translational modification N6-succinyllysine; alternate. Lysine 420 carries the post-translational modification N6-malonyllysine; alternate.

It belongs to the enolase family. In terms of assembly, mammalian enolase is composed of 3 isozyme subunits, alpha, beta and gamma, which can form homodimers or heterodimers which are cell-type and development-specific. ENO1 interacts with PLG in the neuronal plasma membrane and promotes its activation. The C-terminal lysine is required for this binding. Interacts with ENO4 and PGAM2. Interacts with CMTM6. The cofactor is Mg(2+). Post-translationally, ISGylated. In terms of processing, lysine 2-hydroxyisobutyrylation (Khib) by p300/EP300 activates the phosphopyruvate hydratase activity. As to expression, the alpha/alpha homodimer is expressed in embryo and in most adult tissues. The alpha/beta heterodimer and the beta/beta homodimer are found in striated muscle, and the alpha/gamma heterodimer and the gamma/gamma homodimer in neurons.

The protein localises to the cytoplasm. It is found in the cell membrane. The catalysed reaction is (2R)-2-phosphoglycerate = phosphoenolpyruvate + H2O. The protein operates within carbohydrate degradation; glycolysis; pyruvate from D-glyceraldehyde 3-phosphate: step 4/5. Functionally, glycolytic enzyme the catalyzes the conversion of 2-phosphoglycerate to phosphoenolpyruvate. In addition to glycolysis, involved in various processes such as growth control, hypoxia tolerance and allergic responses. May also function in the intravascular and pericellular fibrinolytic system due to its ability to serve as a receptor and activator of plasminogen on the cell surface of several cell-types such as leukocytes and neurons. Stimulates immunoglobulin production. The polypeptide is Alpha-enolase (ENO1) (Bos taurus (Bovine)).